A 156-amino-acid polypeptide reads, in one-letter code: Xanthocillin biosynthesis cluster protein D (156 aa).

2 N-linked (GlcNAc...) asparagine glycosylation sites follow: N107 and N120. Residues 131–153 (IHLNAIALVATVWYGFTLSSSLL) traverse the membrane as a helical segment.

It is found in the membrane. Its pathway is secondary metabolite biosynthesis. Part of the gene cluster that mediates the biosynthesis of the isocyanide xanthocillin and its derivatives. The first step of the pathway consists in the conversion of tyrosine into a vinyl-isonitrile intermediate by the isocyanide synthase xanB. Subsequent oxidative dimerization of this intermediate to form xanthocillin may involve the cytochrome P450 monooxygenase xanG, whose expression is coregulated with that of XanB. Xanthocillin can be further modified by the isonitrile hydratase-like protein xanA which introduces N-formyl groups and the methyltransferase xanE which introduces methyl groups, leading to the production of several derivatives including fumiformamide. Finally, fumiformamide can be subject to both oxidative and reductive cyclization to yield melanocins E and F, respectively. This Aspergillus fumigatus (strain ATCC MYA-4609 / CBS 101355 / FGSC A1100 / Af293) (Neosartorya fumigata) protein is Xanthocillin biosynthesis cluster protein D.